The sequence spans 323 residues: Methionyl-tRNA formyltransferase (323 aa).

121-124 (SLLP) serves as a coordination point for (6S)-5,6,7,8-tetrahydrofolate.

It belongs to the Fmt family.

It catalyses the reaction L-methionyl-tRNA(fMet) + (6R)-10-formyltetrahydrofolate = N-formyl-L-methionyl-tRNA(fMet) + (6S)-5,6,7,8-tetrahydrofolate + H(+). In terms of biological role, attaches a formyl group to the free amino group of methionyl-tRNA(fMet). The formyl group appears to play a dual role in the initiator identity of N-formylmethionyl-tRNA by promoting its recognition by IF2 and preventing the misappropriation of this tRNA by the elongation apparatus. In Desulfotalea psychrophila (strain LSv54 / DSM 12343), this protein is Methionyl-tRNA formyltransferase.